The sequence spans 565 residues: Proline--tRNA ligase (565 aa).

It belongs to the class-II aminoacyl-tRNA synthetase family. ProS type 1 subfamily. Homodimer.

Its subcellular location is the cytoplasm. It catalyses the reaction tRNA(Pro) + L-proline + ATP = L-prolyl-tRNA(Pro) + AMP + diphosphate. Catalyzes the attachment of proline to tRNA(Pro) in a two-step reaction: proline is first activated by ATP to form Pro-AMP and then transferred to the acceptor end of tRNA(Pro). As ProRS can inadvertently accommodate and process non-cognate amino acids such as alanine and cysteine, to avoid such errors it has two additional distinct editing activities against alanine. One activity is designated as 'pretransfer' editing and involves the tRNA(Pro)-independent hydrolysis of activated Ala-AMP. The other activity is designated 'posttransfer' editing and involves deacylation of mischarged Ala-tRNA(Pro). The misacylated Cys-tRNA(Pro) is not edited by ProRS. The sequence is that of Proline--tRNA ligase from Lactobacillus johnsonii (strain CNCM I-12250 / La1 / NCC 533).